A 179-amino-acid polypeptide reads, in one-letter code: Ribosome maturation factor RimM (179 aa).

Residues 99–174 enclose the PRC barrel domain; the sequence is EEDEYYFDQI…IMIVDLPEGL (76 aa).

Belongs to the RimM family. In terms of assembly, binds ribosomal protein uS19.

It localises to the cytoplasm. In terms of biological role, an accessory protein needed during the final step in the assembly of 30S ribosomal subunit, possibly for assembly of the head region. Essential for efficient processing of 16S rRNA. May be needed both before and after RbfA during the maturation of 16S rRNA. It has affinity for free ribosomal 30S subunits but not for 70S ribosomes. The polypeptide is Ribosome maturation factor RimM (Natranaerobius thermophilus (strain ATCC BAA-1301 / DSM 18059 / JW/NM-WN-LF)).